The sequence spans 553 residues: Effector protein HopAB2 (553 aa).

Disordered regions lie at residues 1–123, 198–227, and 239–275; these read MAGI…APRR, AVHQ…GSSQ, and APNQ…AAMR. Residues 1–308 are host recognition; Pto interaction; the sequence is MAGINRAGPS…LRTALERHVM (308 aa). Positions 24–39 are enriched in low complexity; the sequence is SGQAHGSGSGASSSNS. Pro residues predominate over residues 47 to 60; sequence SNTPPSNAPAPPPT. The segment covering 217–227 has biased composition (low complexity); sequence SPAASSSGSSQ. The segment covering 242–255 has biased composition (polar residues); the sequence is QGRSSNTAASQTPV. Positions 309–553 are E3 ubiquitin-protein ligase; that stretch reads QRLPIPLDIG…IAKYAFRIVP (245 aa). The Interaction with Pto-kinase motif lies at 325-328; it reads GINP. The interval 361–380 is disordered; sequence APRPAVPVAPATASRRPDGT. The tract at residues 512-529 is required for E3 ubiquitin-protein ligase and anti-PCD activities and pathogenesis; the sequence is KDLAFMDMKKLAQFLAGK.

The protein belongs to the HopAB family. Interacts physically with plant cell Pto. Auto-ubiquitinated.

The protein localises to the secreted. Its function is as follows. Effector protein involved in gene-for-gene resistance in tomato plants. It is recognized by the host Pto resistance protein and elicits Pto and Prf-dependent hypersensitive response (HR) and programmed cell death (PCD), resulting in host immunity. In susceptible plants, acts as a virulence factor by suppressing PCD and HR-based plant immunity. This function requires its E3 ubiquitin ligase activity probably by recruiting E2 enzymes and transferring ubiquitin molecules to cellular proteins involved in regulation of PCD and targeting them for degradation. Also, induces expression of host genes involved in ethylene biosynthesis and signaling, in particular ACO1 and ACO2, encoding the ethylene-forming enzyme ACC oxidase. The chain is Effector protein HopAB2 (hopAB2) from Pseudomonas syringae pv. tomato (strain ATCC BAA-871 / DC3000).